Consider the following 637-residue polypeptide: tRNA uridine 5-carboxymethylaminomethyl modification enzyme MnmG (637 aa).

18–23 contacts FAD; the sequence is GAGHAG. Position 282 to 296 (282 to 296) interacts with NAD(+); the sequence is GPRYCPSIEDKIVRF.

The protein belongs to the MnmG family. As to quaternary structure, homodimer. Heterotetramer of two MnmE and two MnmG subunits. It depends on FAD as a cofactor.

The protein localises to the cytoplasm. Its function is as follows. NAD-binding protein involved in the addition of a carboxymethylaminomethyl (cmnm) group at the wobble position (U34) of certain tRNAs, forming tRNA-cmnm(5)s(2)U34. In Pediococcus pentosaceus (strain ATCC 25745 / CCUG 21536 / LMG 10740 / 183-1w), this protein is tRNA uridine 5-carboxymethylaminomethyl modification enzyme MnmG.